Consider the following 45-residue polypeptide: Large ribosomal subunit protein bL34 (45 aa).

Belongs to the bacterial ribosomal protein bL34 family.

The sequence is that of Large ribosomal subunit protein bL34 from Salinispora tropica (strain ATCC BAA-916 / DSM 44818 / JCM 13857 / NBRC 105044 / CNB-440).